Consider the following 180-residue polypeptide: Bifunctional protein PyrR (180 aa).

The PRPP-binding motif lies at 101–113; sequence VILVDDVLYTGRT.

It belongs to the purine/pyrimidine phosphoribosyltransferase family. PyrR subfamily. Homodimer and homohexamer; in equilibrium.

It catalyses the reaction UMP + diphosphate = 5-phospho-alpha-D-ribose 1-diphosphate + uracil. In terms of biological role, regulates transcriptional attenuation of the pyrimidine nucleotide (pyr) operon by binding in a uridine-dependent manner to specific sites on pyr mRNA. This disrupts an antiterminator hairpin in the RNA and favors formation of a downstream transcription terminator, leading to a reduced expression of downstream genes. Also displays a weak uracil phosphoribosyltransferase activity which is not physiologically significant. The chain is Bifunctional protein PyrR from Bacillus cytotoxicus (strain DSM 22905 / CIP 110041 / 391-98 / NVH 391-98).